The sequence spans 544 residues: CTP synthase (544 aa).

Residues 1 to 265 (MTKFIFVTGG…DDIICEHLDL (265 aa)) form an amidoligase domain region. Residue Ser-13 participates in CTP binding. Position 13 (Ser-13) interacts with UTP. Residues 14–19 (SLGKGI) and Asp-71 contribute to the ATP site. Positions 71 and 139 each coordinate Mg(2+). Residues 146 to 148 (DIE), 186 to 191 (KTKPTQ), and Lys-222 contribute to the CTP site. UTP contacts are provided by residues 186–191 (KTKPTQ) and Lys-222. A Glutamine amidotransferase type-1 domain is found at 290–542 (NIAMVGKYVD…VEAALAYQAD (253 aa)). Gly-351 is an L-glutamine binding site. Cys-378 acts as the Nucleophile; for glutamine hydrolysis in catalysis. Residues 379-382 (LGMQ), Glu-402, and Arg-469 contribute to the L-glutamine site. Residues His-515 and Glu-517 contribute to the active site.

Belongs to the CTP synthase family. Homotetramer.

It carries out the reaction UTP + L-glutamine + ATP + H2O = CTP + L-glutamate + ADP + phosphate + 2 H(+). It catalyses the reaction L-glutamine + H2O = L-glutamate + NH4(+). The catalysed reaction is UTP + NH4(+) + ATP = CTP + ADP + phosphate + 2 H(+). It functions in the pathway pyrimidine metabolism; CTP biosynthesis via de novo pathway; CTP from UDP: step 2/2. Its activity is regulated as follows. Allosterically activated by GTP, when glutamine is the substrate; GTP has no effect on the reaction when ammonia is the substrate. The allosteric effector GTP functions by stabilizing the protein conformation that binds the tetrahedral intermediate(s) formed during glutamine hydrolysis. Inhibited by the product CTP, via allosteric rather than competitive inhibition. Functionally, catalyzes the ATP-dependent amination of UTP to CTP with either L-glutamine or ammonia as the source of nitrogen. Regulates intracellular CTP levels through interactions with the four ribonucleotide triphosphates. This is CTP synthase from Laribacter hongkongensis (strain HLHK9).